A 379-amino-acid chain; its full sequence is 2-methylcitrate synthase (379 aa).

His-187 contacts substrate. Residue His-222 is part of the active site. Residue 264–268 (KVMGF) coordinates CoA. The active site involves His-270. Arg-279 provides a ligand contact to substrate. Residue Asp-321 is part of the active site. Residues Arg-346 and Arg-365 each contribute to the substrate site.

It belongs to the citrate synthase family. Homodimer.

The enzyme catalyses propanoyl-CoA + oxaloacetate + H2O = (2S,3S)-2-methylcitrate + CoA + H(+). The catalysed reaction is oxaloacetate + acetyl-CoA + H2O = citrate + CoA + H(+). Its pathway is organic acid metabolism; propanoate degradation. It participates in carbohydrate metabolism; tricarboxylic acid cycle; isocitrate from oxaloacetate: step 1/2. Its function is as follows. Involved in the catabolism of short chain fatty acids (SCFA) via the tricarboxylic acid (TCA)(acetyl degradation route) and via the 2-methylcitrate cycle I (propionate degradation route). Catalyzes the Claisen condensation of propionyl-CoA and oxaloacetate (OAA) to yield 2-methylcitrate (2-MC) and CoA. Also catalyzes the condensation of oxaloacetate with acetyl-CoA but with a lower specificity. The polypeptide is 2-methylcitrate synthase (gltA) (Antarctic bacterium DS2-3R).